Reading from the N-terminus, the 420-residue chain is Serine hydroxymethyltransferase (420 aa).

(6S)-5,6,7,8-tetrahydrofolate is bound by residues Leu-121 and 125–127; that span reads GHL. At Lys-230 the chain carries N6-(pyridoxal phosphate)lysine. Residues Glu-246 and 354 to 356 each bind (6S)-5,6,7,8-tetrahydrofolate; that span reads SPF.

This sequence belongs to the SHMT family. Homodimer. It depends on pyridoxal 5'-phosphate as a cofactor.

The protein localises to the cytoplasm. It catalyses the reaction (6R)-5,10-methylene-5,6,7,8-tetrahydrofolate + glycine + H2O = (6S)-5,6,7,8-tetrahydrofolate + L-serine. It participates in one-carbon metabolism; tetrahydrofolate interconversion. It functions in the pathway amino-acid biosynthesis; glycine biosynthesis; glycine from L-serine: step 1/1. Its function is as follows. Catalyzes the reversible interconversion of serine and glycine with tetrahydrofolate (THF) serving as the one-carbon carrier. This reaction serves as the major source of one-carbon groups required for the biosynthesis of purines, thymidylate, methionine, and other important biomolecules. Also exhibits THF-independent aldolase activity toward beta-hydroxyamino acids, producing glycine and aldehydes, via a retro-aldol mechanism. The polypeptide is Serine hydroxymethyltransferase (Rickettsia peacockii (strain Rustic)).